Consider the following 308-residue polypeptide: Aldo-keto reductase AKR2E4 (308 aa).

NADP(+) contacts are provided by residues 22–29 (GTGRGTAK) and D53. The active-site Proton donor is Y58. NADP(+)-binding positions include 158 to 159 (SN), R215, and 259 to 269 (KSTNKQRIAQN).

The protein belongs to the short-chain dehydrogenases/reductases (SDR) family. In terms of tissue distribution, detected in hemolymph (at protein level). Detected in larval ovary.

Its activity is regulated as follows. Subject to substrate inhibition by high levels of 3-dehydroecdysone. In terms of biological role, NADP-dependent oxidoreductase with high 3-dehydroecdysone reductase activity. May play a role in the regulation of molting. Has lower activity with phenylglyoxal and isatin (in vitro). Has no activity with NADH as cosubstrate. Has no activity with nitrobenzaldehyde and 3-hydroxybenzaldehyde. The chain is Aldo-keto reductase AKR2E4 (akr2e) from Bombyx mori (Silk moth).